Consider the following 407-residue polypeptide: Phosphopentomutase (407 aa).

The Mn(2+) site is built by Asp-11, Asp-305, His-310, Asp-346, His-347, and His-358.

It belongs to the phosphopentomutase family. It depends on Mn(2+) as a cofactor.

The protein localises to the cytoplasm. The catalysed reaction is 2-deoxy-alpha-D-ribose 1-phosphate = 2-deoxy-D-ribose 5-phosphate. The enzyme catalyses alpha-D-ribose 1-phosphate = D-ribose 5-phosphate. It participates in carbohydrate degradation; 2-deoxy-D-ribose 1-phosphate degradation; D-glyceraldehyde 3-phosphate and acetaldehyde from 2-deoxy-alpha-D-ribose 1-phosphate: step 1/2. In terms of biological role, isomerase that catalyzes the conversion of deoxy-ribose 1-phosphate (dRib-1-P) and ribose 1-phosphate (Rib-1-P) to deoxy-ribose 5-phosphate (dRib-5-P) and ribose 5-phosphate (Rib-5-P), respectively. The sequence is that of Phosphopentomutase from Legionella pneumophila subsp. pneumophila (strain Philadelphia 1 / ATCC 33152 / DSM 7513).